A 347-amino-acid polypeptide reads, in one-letter code: MVSVEFLQELPKCEHHLHLEGTLEPDLLFPLAKRNDIILPEGFPKSVEELNEKYKKFRDLQDFLDYYYIGTNVLISEQDFFDLAWAYFKKVHKQGLVHAEVFYDPQSHTSRGISIETVTKGFQRACDKAFSEFGITSKLIMCLLRHIEPEECLKTIEEATPFIKDGTISALGLDSAEKPFPPHLFVECYGKAASLNKDLKLTAHAGEEGPAQFVSDALDLLQVTRIDHGINSQYDEELLDRLSRDQTMLTICPLSNVKLQVVQSVSELPLQKFLDRDVPFSLNSDDPAYFGGYILDVYTQVSKDFPHWDHETWGRIAKNAIKGSWCDDKRKNGLLSRVDEVVTKYSH.

Residues H16, H18, and H204 each contribute to the Zn(2+) site. The Proton donor role is filled by E207. D285 contacts Zn(2+). D286 serves as a coordination point for substrate.

The protein belongs to the metallo-dependent hydrolases superfamily. Adenosine and AMP deaminases family. Adenine deaminase type 2 subfamily. Zn(2+) serves as cofactor. Post-translationally, probably ubiquitinated when cells enter quiescence in response to nutrient limitation, since it is specifically degraded via a process requiring the F-box protein SAF1 and components of the SKP1-Cullin-F-box complex.

It localises to the cytoplasm. It is found in the nucleus. The enzyme catalyses adenine + H2O + H(+) = hypoxanthine + NH4(+). Functionally, catalyzes the hydrolytic deamination of adenine to hypoxanthine. Plays an important role in the purine salvage pathway and in nitrogen catabolism. Also exhibits a low activity towards N(6)-substituted adenines that are commonly known as the plant hormones cytokinins. The protein is Adenine deaminase of Saccharomyces cerevisiae (strain ATCC 204508 / S288c) (Baker's yeast).